The primary structure comprises 347 residues: Protein RecA (347 aa).

67–74 (GPESSGKT) lines the ATP pocket.

It belongs to the RecA family. The protein migrates as a 40 kDa protein in strains 69A and NCTC 11637. When overexpressed in E.coli a 38 kDa protein is made which is unable to complement the E.coli deletion mutant. It has been suggested this size difference is due to a post-translational modification.

The protein resides in the cytoplasm. Functionally, can catalyze the hydrolysis of ATP in the presence of single-stranded DNA, the ATP-dependent uptake of single-stranded DNA by duplex DNA, and the ATP-dependent hybridization of homologous single-stranded DNAs. It interacts with LexA causing its activation and leading to its autocatalytic cleavage. Its function is as follows. Deletion of this gene leads to the inability of the bacteria to perform homologous recombination, and markedly increases UV sensitivity. This chain is Protein RecA, found in Helicobacter pylori (strain ATCC 700392 / 26695) (Campylobacter pylori).